The primary structure comprises 324 residues: Adipolin (324 aa).

An N-terminal signal peptide occupies residues 1 to 24 (MRCWVWLLVAIVLCQQLSVVRVLA). 2 disordered regions span residues 28–66 (ERKK…DPGL) and 83–121 (GANS…MPGA). A compositionally biased stretch (polar residues) spans 40 to 49 (EPFNVSLSNS). The N-linked (GlcNAc...) asparagine glycan is linked to asparagine 43. Basic and acidic residues predominate over residues 50 to 60 (EELHETDKLSE). Over residues 86–98 (SKKKCKGKDKKLR) the composition is skewed to basic residues. Pro residues predominate over residues 103-118 (PPGPPGPQGPPGPPGM). The C1q domain maps to 169–324 (YRRVDEGFHC…SDFMGILMGL (156 aa)).

The protein belongs to the adipolin/erythroferrone family. In terms of assembly, homomultimer; disulfide-linked.

Its subcellular location is the secreted. In terms of biological role, insulin-sensitizing adipocyte-secreted protein (adipokine) that regulates glucose metabolism in liver and adipose tissue. In Xenopus tropicalis (Western clawed frog), this protein is Adipolin (c1qtnf12).